The primary structure comprises 423 residues: Guanine nucleotide-binding protein subunit beta (423 aa).

WD repeat units lie at residues 90-120 (GHNNKISDFRWSRDSKRILSASQDGFMLIWD), 132-162 (LDSQWVLSCAISPSSTLVASAGLNNNCTIYR), 179-208 (GHTCYISDIEFTDNAHILTASGDMTCALWD), 220-256 (DHLGDVLALAIPEEPNSENSSNTFASCGSDGYTYIWD), 268-298 (VNDSDINALRFFKDGMSIVAGSDNGAINMYD), 348-377 (DNQGVVSLDFSASGRLMYSCYTDIGCVVWD), and 389-419 (GHGGRVTGVRSSPDGLAVCTGSWDSTMKIWS).

This sequence belongs to the WD repeat G protein beta family. As to quaternary structure, g proteins are composed of 3 units, alpha, beta and gamma. The beta-gamma subunit complex (STE4-STE18 complex) interacts with PLP1 and PLP2. Interacts with SYG1.

In terms of biological role, implicated in the a- and alpha-factor response pathway. The beta and gamma chains of the putative yeast mating response pathway G protein play a positive role in initiation of the mating response. The beta and gamma chains are required for the GTPase activity, for replacement of GDP by GTP, and for G protein-effector interaction. The sequence is that of Guanine nucleotide-binding protein subunit beta (STE4) from Saccharomyces cerevisiae (strain ATCC 204508 / S288c) (Baker's yeast).